The chain runs to 431 residues: Trigger factor (431 aa).

Residues 158–243 (GDLVAVETWS…VAEVSEPVVP (86 aa)) enclose the PPIase FKBP-type domain.

It belongs to the FKBP-type PPIase family. Tig subfamily.

The protein resides in the cytoplasm. The enzyme catalyses [protein]-peptidylproline (omega=180) = [protein]-peptidylproline (omega=0). Involved in protein export. Acts as a chaperone by maintaining the newly synthesized protein in an open conformation. Functions as a peptidyl-prolyl cis-trans isomerase. This Stenotrophomonas maltophilia (strain R551-3) protein is Trigger factor.